The sequence spans 129 residues: Large-conductance mechanosensitive channel (129 aa).

The next 3 membrane-spanning stretches (helical) occupy residues 8 to 28 (FAFR…AAFS), 30 to 50 (IIKS…IGGI), and 67 to 87 (GQFL…FLFV).

This sequence belongs to the MscL family. In terms of assembly, homopentamer.

Its subcellular location is the cell membrane. In terms of biological role, channel that opens in response to stretch forces in the membrane lipid bilayer. May participate in the regulation of osmotic pressure changes within the cell. This chain is Large-conductance mechanosensitive channel, found in Exiguobacterium sibiricum (strain DSM 17290 / CCUG 55495 / CIP 109462 / JCM 13490 / 255-15).